Consider the following 500-residue polypeptide: Flt3-interacting zinc finger protein 1 (500 aa).

Met-1 carries the N-acetylmethionine modification. A disordered region spans residues 1 to 24; that stretch reads MEDSSLPVVPAPIAAPGPAPSATA. Residues 9–19 are compositionally biased toward pro residues; sequence VPAPIAAPGPA. 6 C2H2-type zinc fingers span residues 29–51, 57–79, 85–107, 113–136, 204–226, and 232–254; these read FHCS…FARH, HACP…LRSH, YRCS…QVVH, YCCL…KRQH, FACG…WAAH, and FKCP…KLTH. Disordered stretches follow at residues 255–284 and 306–328; these read DLQG…ASEV and KLEA…AAAE. Residues 256 to 267 are compositionally biased toward polar residues; it reads LQGSNAPPTQVW. 5 consecutive C2H2-type zinc fingers follow at residues 336–357, 363–386, 418–440, 446–468, and 474–496; these read YQCD…LEAH, YGCG…RASH, FGCS…VLVH, FPCL…RLLH, and FPCH…LKLH. Positions 383 to 415 are disordered; sequence RASHGEGSGEAAPDGEGNQAAGGPGPGSSSRSK.

In terms of assembly, interacts with FLT3 cytoplasmic catalytic domain, following receptor stimulation, in a kinase-independent manner. Does not interact with other structurally related receptor tyrosine kinases, including KIT, CSF1R and PDGFR. Interacts with NRL. As to expression, widely expressed. In the retina, highest expression in the ganglion cell layer.

Its subcellular location is the cytoplasm. It localises to the nucleus. Functionally, may be a transcriptional repressor of NRL function in photoreceptors. Does not repress CRX-mediated transactivation. This Mus musculus (Mouse) protein is Flt3-interacting zinc finger protein 1 (Fiz1).